A 32-amino-acid chain; its full sequence is Photosystem II reaction center protein T (32 aa).

Residues 3–23 (TLVYTFLLIGTLAVLFAAVFF) form a helical membrane-spanning segment.

This sequence belongs to the PsbT family. As to quaternary structure, PSII is composed of 1 copy each of membrane proteins PsbA, PsbB, PsbC, PsbD, PsbE, PsbF, PsbH, PsbI, PsbJ, PsbK, PsbL, PsbM, PsbT, PsbX, PsbY, PsbZ, Psb30/Ycf12, at least 3 peripheral proteins of the oxygen-evolving complex and a large number of cofactors. It forms dimeric complexes.

It localises to the plastid. It is found in the chloroplast thylakoid membrane. Found at the monomer-monomer interface of the photosystem II (PS II) dimer, plays a role in assembly and dimerization of PSII. PSII is a light-driven water plastoquinone oxidoreductase, using light energy to abstract electrons from H(2)O, generating a proton gradient subsequently used for ATP formation. This chain is Photosystem II reaction center protein T, found in Guillardia theta (Cryptophyte).